The chain runs to 121 residues: Heme-degrading monooxygenase (121 aa).

Residues 2 to 101 (IIVTNTIKVE…EQREDRKGIV (100 aa)) enclose the ABM domain. A Fe cation-binding site is contributed by asparagine 6. A disordered region spans residues 76 to 98 (KSDSFKKAHGRTKDTREQREDRK). Residues 78–98 (DSFKKAHGRTKDTREQREDRK) are compositionally biased toward basic and acidic residues. Heme is bound at residue histidine 84.

Belongs to the antibiotic biosynthesis monooxygenase family. Heme-degrading monooxygenase IsdG subfamily. Homodimer.

The protein resides in the cytoplasm. It catalyses the reaction heme b + 3 reduced [NADPH--hemoprotein reductase] + 3 O2 = biliverdin IXalpha + CO + Fe(2+) + 3 oxidized [NADPH--hemoprotein reductase] + 3 H2O + H(+). In terms of biological role, allows bacterial pathogens to use the host heme as an iron source. Catalyzes the oxidative degradation of the heme macrocyclic porphyrin ring to the biliverdin in the presence of a suitable electron donor such as ascorbate or NADPH--cytochrome P450 reductase, with subsequent release of free iron. This chain is Heme-degrading monooxygenase, found in Listeria innocua serovar 6a (strain ATCC BAA-680 / CLIP 11262).